We begin with the raw amino-acid sequence, 916 residues long: RNA-directed DNA polymerase from mobile element jockey (916 aa).

In terms of domain architecture, Reverse transcriptase spans 483-757; that stretch reads SILRVGYFPK…HEYKYLGVIL (275 aa). The segment at 890–916 is disordered; the sequence is RSASPRSRVRRRLKRHHPQDLLDRALT. Positions 896–906 are enriched in basic residues; that stretch reads SRVRRRLKRHH. The span at 907–916 shows a compositional bias: basic and acidic residues; the sequence is PQDLLDRALT.

Mg(2+) serves as cofactor. Requires Mn(2+) as cofactor.

The enzyme catalyses DNA(n) + a 2'-deoxyribonucleoside 5'-triphosphate = DNA(n+1) + diphosphate. With respect to regulation, inactivated by sulphydryl reagent. In Drosophila funebris (Fruit fly), this protein is RNA-directed DNA polymerase from mobile element jockey (jockey\pol).